Reading from the N-terminus, the 168-residue chain is Small ribosomal subunit protein uS5 (168 aa).

The region spanning 13–76 is the S5 DRBM domain; it reads IQEKLVAVRR…ENARRNMISV (64 aa).

It belongs to the universal ribosomal protein uS5 family. In terms of assembly, part of the 30S ribosomal subunit. Contacts proteins S4 and S8.

Its function is as follows. With S4 and S12 plays an important role in translational accuracy. In terms of biological role, located at the back of the 30S subunit body where it stabilizes the conformation of the head with respect to the body. This chain is Small ribosomal subunit protein uS5, found in Coxiella burnetii (strain RSA 493 / Nine Mile phase I).